A 168-amino-acid chain; its full sequence is 2-C-methyl-D-erythritol 2,4-cyclodiphosphate synthase (168 aa).

The a divalent metal cation site is built by Asp13 and His15. 4-CDP-2-C-methyl-D-erythritol 2-phosphate-binding positions include 13 to 15 (DVH) and 39 to 40 (HS). Position 47 (His47) interacts with a divalent metal cation. 4-CDP-2-C-methyl-D-erythritol 2-phosphate-binding positions include 61-63 (DIG), 66-70 (FPDTD), Phe144, and Lys147.

This sequence belongs to the IspF family. Homotrimer. A divalent metal cation is required as a cofactor.

The catalysed reaction is 4-CDP-2-C-methyl-D-erythritol 2-phosphate = 2-C-methyl-D-erythritol 2,4-cyclic diphosphate + CMP. It participates in isoprenoid biosynthesis; isopentenyl diphosphate biosynthesis via DXP pathway; isopentenyl diphosphate from 1-deoxy-D-xylulose 5-phosphate: step 4/6. Involved in the biosynthesis of isopentenyl diphosphate (IPP) and dimethylallyl diphosphate (DMAPP), two major building blocks of isoprenoid compounds. Catalyzes the conversion of 4-diphosphocytidyl-2-C-methyl-D-erythritol 2-phosphate (CDP-ME2P) to 2-C-methyl-D-erythritol 2,4-cyclodiphosphate (ME-CPP) with a corresponding release of cytidine 5-monophosphate (CMP). This is 2-C-methyl-D-erythritol 2,4-cyclodiphosphate synthase from Ralstonia pickettii (strain 12J).